Consider the following 535-residue polypeptide: Glucose-6-phosphate isomerase (535 aa).

E359 acts as the Proton donor in catalysis. Active-site residues include H390 and K505.

The protein belongs to the GPI family.

It is found in the cytoplasm. It catalyses the reaction alpha-D-glucose 6-phosphate = beta-D-fructose 6-phosphate. It functions in the pathway carbohydrate biosynthesis; gluconeogenesis. It participates in carbohydrate degradation; glycolysis; D-glyceraldehyde 3-phosphate and glycerone phosphate from D-glucose: step 2/4. Functionally, catalyzes the reversible isomerization of glucose-6-phosphate to fructose-6-phosphate. The polypeptide is Glucose-6-phosphate isomerase (Treponema pallidum (strain Nichols)).